The following is a 91-amino-acid chain: Signal recognition particle 19 kDa protein (91 aa).

This sequence belongs to the SRP19 family. In terms of assembly, part of the signal recognition particle protein translocation system, which is composed of SRP and FtsY. Archaeal SRP consists of a 7S RNA molecule of 300 nucleotides and two protein subunits: SRP54 and SRP19.

The protein localises to the cytoplasm. Involved in targeting and insertion of nascent membrane proteins into the cytoplasmic membrane. Binds directly to 7S RNA and mediates binding of the 54 kDa subunit of the SRP. This is Signal recognition particle 19 kDa protein from Methanoregula boonei (strain DSM 21154 / JCM 14090 / 6A8).